The primary structure comprises 292 residues: Non-homologous end joining protein Ku (292 aa).

Positions 9–187 (ITFGLVNVPV…TVPPITEREL (179 aa)) constitute a Ku domain. The span at 264–285 (AASAFPAAEKAPAGKNAATASA) shows a compositional bias: low complexity. Residues 264 to 292 (AASAFPAAEKAPAGKNAATASAKKARKLA) are disordered.

The protein belongs to the prokaryotic Ku family. Homodimer. Interacts with LigD.

With LigD forms a non-homologous end joining (NHEJ) DNA repair enzyme, which repairs dsDNA breaks with reduced fidelity. Binds linear dsDNA with 5'- and 3'- overhangs but not closed circular dsDNA nor ssDNA. Recruits and stimulates the ligase activity of LigD. The sequence is that of Non-homologous end joining protein Ku from Leifsonia xyli subsp. xyli (strain CTCB07).